Here is a 476-residue protein sequence, read N- to C-terminus: Trigger factor (476 aa).

Residues 169-254 (GDKVTLDYVG…VKEVAAAEEL (86 aa)) form the PPIase FKBP-type domain. Residues 437–476 (SRDELLAEDEAEGEEKKAAGETKKKAAPKKKAAKKESAAE) are disordered. Positions 450 to 460 (EEKKAAGETKK) are enriched in basic and acidic residues.

It belongs to the FKBP-type PPIase family. Tig subfamily.

It localises to the cytoplasm. The enzyme catalyses [protein]-peptidylproline (omega=180) = [protein]-peptidylproline (omega=0). Functionally, involved in protein export. Acts as a chaperone by maintaining the newly synthesized protein in an open conformation. Functions as a peptidyl-prolyl cis-trans isomerase. The sequence is that of Trigger factor from Chelativorans sp. (strain BNC1).